The sequence spans 75 residues: Putative antitoxin VapB29 (75 aa).

In terms of biological role, possibly the antitoxic component of a type II toxin-antitoxin (TA) system. Its cognate toxin is VapC29 (Potential). In Mycobacterium tuberculosis (strain CDC 1551 / Oshkosh), this protein is Putative antitoxin VapB29 (vapB29).